An 86-amino-acid polypeptide reads, in one-letter code: Long neurotoxin homolog (86 aa).

A signal peptide spans 1–21; sequence MKTLLLTLVVVTIVCLALGYT. 5 disulfide bridges follow: Cys24/Cys45, Cys27/Cys32, Cys38/Cys63, Cys67/Cys78, and Cys79/Cys84.

This sequence belongs to the three-finger toxin family. Ancestral subfamily. Orphan group II sub-subfamily. In terms of tissue distribution, expressed by the venom gland.

The protein resides in the secreted. Its function is as follows. Binds with low affinity and weakly inhibits muscle nicotinic acetylcholine receptor (nAChR). The sequence is that of Long neurotoxin homolog from Naja atra (Chinese cobra).